Reading from the N-terminus, the 590-residue chain is Aspartate--tRNA(Asp/Asn) ligase (590 aa).

Glutamate 172 lines the L-aspartate pocket. The segment at 196-199 is aspartate; the sequence is QLFK. Arginine 218 provides a ligand contact to L-aspartate. ATP-binding positions include 218-220 and glutamine 227; that span reads RDE. Position 449 (histidine 449) interacts with L-aspartate. Glutamate 484 lines the ATP pocket. L-aspartate is bound at residue arginine 491. 536–539 is a binding site for ATP; the sequence is GVDR.

It belongs to the class-II aminoacyl-tRNA synthetase family. Type 1 subfamily. Homodimer.

Its subcellular location is the cytoplasm. It catalyses the reaction tRNA(Asx) + L-aspartate + ATP = L-aspartyl-tRNA(Asx) + AMP + diphosphate. Functionally, aspartyl-tRNA synthetase with relaxed tRNA specificity since it is able to aspartylate not only its cognate tRNA(Asp) but also tRNA(Asn). Reaction proceeds in two steps: L-aspartate is first activated by ATP to form Asp-AMP and then transferred to the acceptor end of tRNA(Asp/Asn). This is Aspartate--tRNA(Asp/Asn) ligase from Francisella tularensis subsp. holarctica (strain FTNF002-00 / FTA).